The following is a 548-amino-acid chain: Zinc metalloproteinase dpy-31 (548 aa).

The first 24 residues, 1–24 (MSLLRSASLLLVVVTAALPPCTLG), serve as a signal peptide directing secretion. Residues 25 to 150 (YSLHDGSRLD…KTGQRRVKRK (126 aa)) constitute a propeptide that is removed on maturation. The 200-residue stretch at 150-349 (KFIGSDLRRW…IRLMNKIYCS (200 aa)) folds into the Peptidase M12A domain. The N-linked (GlcNAc...) asparagine glycan is linked to asparagine 190. 5 cysteine pairs are disulfide-bonded: cysteine 193/cysteine 348, cysteine 216/cysteine 237, cysteine 352/cysteine 372, cysteine 374/cysteine 383, and cysteine 394/cysteine 422. Zn(2+) is bound at residue histidine 245. The active site involves glutamate 246. Zn(2+)-binding residues include histidine 249 and histidine 255. One can recognise an EGF-like domain in the interval 344–384 (NKIYCSNVCSRKLPCQRGGYTDPRRCDRCRCPDGFTGQFCE). The region spanning 394 to 510 (CGGRIQVNSG…RGFEARARAL (117 aa)) is the CUB domain. Asparagine 461 carries an N-linked (GlcNAc...) asparagine glycan. The TSP type-1 domain occupies 513–547 (NGQWASWTPWTPCTASCGACGSRMRTRVCPHGACP). 3 cysteine pairs are disulfide-bonded: cysteine 525/cysteine 546, cysteine 529/cysteine 546, and cysteine 541/cysteine 546.

Zn(2+) serves as cofactor.

The protein resides in the secreted. Its function is as follows. Metalloprotease which cleaves the carboxyl terminus of procollagens to mature collagens. Probably involved in cuticular collagen maturation. In Haemonchus contortus (Barber pole worm), this protein is Zinc metalloproteinase dpy-31.